We begin with the raw amino-acid sequence, 278 residues long: MRSIFIVPIFLLFLSSCSEEKTQNKNQEEKQIIVQETLQNNNTSQEINQEAVNSENAAESIVPANDNNQTDEVSTPPSQEQKNPEIKPVKVTFKVDDNDMVLGNKKSNVIVVEYFSPTCPHCAYYHQTIFPELKKKYIDTNKIAYVVREFIATKQDLDAAILARCKGDINSFVQFHNIILQQQDKWAYSNKYRELLTDIGQLGGVPPEEYKQCLNSDKITETLIANTNFVANAPKFIGTPSFFVNGVQTGNYSIDSISTAVDKALEEQKEKAKNEMSL.

A signal peptide spans 1–18 (MRSIFIVPIFLLFLSSCS). The disordered stretch occupies residues 62–84 (VPANDNNQTDEVSTPPSQEQKNP). A compositionally biased stretch (polar residues) spans 65–81 (NDNNQTDEVSTPPSQEQ). Residues 77 to 266 (PSQEQKNPEI…ISTAVDKALE (190 aa)) enclose the Thioredoxin domain. A disulfide bond links cysteine 119 and cysteine 122.

It belongs to the thioredoxin family. DsbA subfamily.

It is found in the periplasm. Functionally, may be required for disulfide bond formation in some proteins. This Rickettsia felis (strain ATCC VR-1525 / URRWXCal2) (Rickettsia azadi) protein is Putative protein-disulfide oxidoreductase RF_0032.